A 638-amino-acid chain; its full sequence is Cytoplasmic dynein 1 intermediate chain 2 (638 aa).

2 stretches are compositionally biased toward basic and acidic residues: residues 1–13 and 20–43; these read MSDK…ELER and QIRE…KKEA. Disordered stretches follow at residues 1 to 135 and 154 to 209; these read MSDK…GRGP and VTYT…HELT. Residue S2 is modified to N-acetylserine. Diphosphoserine is present on S51. 2 positions are modified to phosphoserine: S51 and S90. A compositionally biased stretch (low complexity) spans 88–97; it reads PSSKSVSTPS. T95 carries the post-translational modification Phosphothreonine. 3 positions are modified to phosphoserine: S97, S101, and S104. An interaction with DYNLT1 region spans residues 133 to 165; it reads RGPIKLGMAKITQVDFPPREIVTYTKETQTPVT. Residues 190 to 209 show a composition bias toward basic and acidic residues; sequence EKILKKDEENDSKAPPHELT. WD repeat units follow at residues 277–326, 330–370, 379–420, 429–469, 474–519, and 568–607; these read SKHR…TTPE, HCQS…RTPV, AHTH…HPQD, SKAV…AGIS, GHQG…PLYS, and EGNP…AVPR.

This sequence belongs to the dynein intermediate chain family. In terms of assembly, homodimer. The cytoplasmic dynein 1 complex consists of two catalytic heavy chains (HCs) and a number of non-catalytic subunits presented by intermediate chains (ICs), light intermediate chains (LICs) and light chains (LCs); the composition seems to vary in respect to the IC, LIC and LC composition. The heavy chain homodimer serves as a scaffold for the probable homodimeric assembly of the respective non-catalytic subunits. The ICs and LICs bind directly to the HC dimer and the LCs assemble on the IC dimer. Interacts with DYNLT3. Interacts with DYNLT1. Interacts (dephosphorylated at Ser-90) with DCTN1. Interacts with BICD2. Interacts with SPEF2. Interacts with CFAP61. In terms of processing, the phosphorylation status of Ser-90 appears to be involved in dynactin-dependent target binding. Post-translationally, pyrophosphorylation by 5-diphosphoinositol pentakisphosphate (5-IP7) promotes interaction with DCTN1. Serine pyrophosphorylation is achieved by Mg(2+)-dependent, but enzyme independent transfer of a beta-phosphate from a inositol pyrophosphate to a pre-phosphorylated serine residue. Skeletal muscle, testis, kidney, brain, heart and spleen.

The protein resides in the cytoplasm. Its subcellular location is the cytoskeleton. Acts as one of several non-catalytic accessory components of the cytoplasmic dynein 1 complex that are thought to be involved in linking dynein to cargos and to adapter proteins that regulate dynein function. Cytoplasmic dynein 1 acts as a motor for the intracellular retrograde motility of vesicles and organelles along microtubules. The intermediate chains mediate the binding of dynein to dynactin via its 150 kDa component (p150-glued) DCTN1. Involved in membrane-transport, such as Golgi apparatus, late endosomes and lysosomes. This Rattus norvegicus (Rat) protein is Cytoplasmic dynein 1 intermediate chain 2 (Dync1i2).